The sequence spans 367 residues: Type II methyltransferase M.CviJI (367 aa).

One can recognise an SAM-dependent MTase C5-type domain in the interval 3–367 (FRTLELFAGI…EYLGYLVQYD (365 aa)). The active site involves cysteine 73.

The protein belongs to the class I-like SAM-binding methyltransferase superfamily. C5-methyltransferase family.

It carries out the reaction a 2'-deoxycytidine in DNA + S-adenosyl-L-methionine = a 5-methyl-2'-deoxycytidine in DNA + S-adenosyl-L-homocysteine + H(+). In terms of biological role, a methylase that recognizes the double-stranded sequence 5'-RGCY-3', methylates C-3 on both strands, and protects the DNA from cleavage by the CviJI endonuclease. The chain is Type II methyltransferase M.CviJI from Chlorella (PBCV-IL3A).